Here is a 336-residue protein sequence, read N- to C-terminus: Flagellar filament 41 kDa core protein (336 aa).

A disordered region spans residues 208–236; that stretch reads AAPVQEGVQQEGAQQPAPATAPSQGGVNS. The span at 210–233 shows a compositional bias: low complexity; the sequence is PVQEGVQQEGAQQPAPATAPSQGG.

The protein belongs to the bacterial flagellin family. As to quaternary structure, the flagellum consists of an outer layer composed of repeating units of FlaA around a core that contains several antigenically related polypeptides.

The protein resides in the periplasmic flagellum. Its subcellular location is the periplasm. Component of the core of the flagella. In Borreliella burgdorferi (strain ATCC 35210 / DSM 4680 / CIP 102532 / B31) (Borrelia burgdorferi), this protein is Flagellar filament 41 kDa core protein (fla).